A 295-amino-acid chain; its full sequence is Small ribosomal subunit protein uS3 (295 aa).

Residues Val-39–Arg-107 enclose the KH type-2 domain. The disordered stretch occupies residues Gly-213–Glu-295. Over residues Glu-224 to Ala-245 the composition is skewed to basic and acidic residues. 2 stretches are compositionally biased toward low complexity: residues Pro-246–Gly-255 and Ala-283–Glu-295.

It belongs to the universal ribosomal protein uS3 family. Part of the 30S ribosomal subunit. Forms a tight complex with proteins S10 and S14.

Its function is as follows. Binds the lower part of the 30S subunit head. Binds mRNA in the 70S ribosome, positioning it for translation. The sequence is that of Small ribosomal subunit protein uS3 from Polaromonas naphthalenivorans (strain CJ2).